The chain runs to 190 residues: RING finger protein 227 (190 aa).

The RING-type zinc-finger motif lies at Cys-18–Arg-81. Positions Ala-108–Gly-147 are disordered. The span at Glu-126–Ala-135 shows a compositional bias: acidic residues.

In Mus musculus (Mouse), this protein is RING finger protein 227.